Here is a 331-residue protein sequence, read N- to C-terminus: UDP-galactose/UDP-glucose transporter 3 (331 aa).

Transmembrane regions (helical) follow at residues 11 to 31 (VLLLSFCVAGIWAAYIYQGIL), 49 to 69 (HLAFLNLAQNVICLVWSYIMI), 80 to 100 (APWWTYWSAGITNTIGPAMGI), 112 to 132 (VLAKSSKMIPVMLMGSLVYGI), 135 to 155 (TLPEYLCTFLVAGGVSMFALL), 170 to 190 (APLGYGLCFLNLAFDGFTNAT), 206 to 226 (IMLGMNLWGTIYNMVYMFGLP), and 245 to 265 (WDILMYCLCGAVGQNFIFLTI). A Di-lysine motif motif is present at residues 327–331 (KKKKA).

This sequence belongs to the nucleotide-sugar transporter family. UDP-galactose:UMP antiporter (TC 2.A.7.11) subfamily. In terms of tissue distribution, mostly expressed in flowers, and, to a lower extent, in roots, stems and leaves.

Its subcellular location is the endoplasmic reticulum membrane. The protein localises to the golgi apparatus membrane. In terms of biological role, essential sugar transporter required for the transport of UDP-glucose from the cytoplasm into the Golgi and the endoplasmic reticulum. Essential for pollen development and involved in embryo sac progress. This is UDP-galactose/UDP-glucose transporter 3 from Arabidopsis thaliana (Mouse-ear cress).